Consider the following 609-residue polypeptide: 2',5'-phosphodiesterase 12 (609 aa).

The N-terminal 16 residues, 1–16 (MWRLPGVRAALRGVRT), are a transit peptide targeting the mitochondrion. A disordered region spans residues 203–231 (PRAAEPEGGGPSSSSPSSPSPGWTETGVD). A compositionally biased stretch (low complexity) spans 214-224 (SSSSPSSPSPG). Position 217 is a phosphoserine (Ser-217). Positions 351, 496, and 498 each coordinate Mg(2+). The Proton donor/acceptor role is filled by Asp-496.

The protein belongs to the CCR4/nocturin family. The cofactor is Mg(2+). Liver.

It is found in the mitochondrion matrix. The catalysed reaction is Exonucleolytic cleavage of poly(A) to 5'-AMP.. Its function is as follows. Enzyme that cleaves 2',5'-phosphodiester bond linking adenosines of the 5'-triphosphorylated oligoadenylates, triphosphorylated oligoadenylates referred as 2-5A modulates the 2-5A system. Degrades triphosphorylated 2-5A to produce AMP and ATP. Also cleaves 3',5'-phosphodiester bond of oligoadenylates. Plays a role as a negative regulator of the 2-5A system that is one of the major pathways for antiviral and antitumor functions induced by interferons (IFNs). Suppression of this enzyme increases cellular 2-5A levels and decreases viral replication in cultured small-airway epithelial cells. The polypeptide is 2',5'-phosphodiesterase 12 (PDE12) (Bos taurus (Bovine)).